We begin with the raw amino-acid sequence, 110 residues long: Thiosulfate sulfurtransferase GlpE (110 aa).

A Rhodanese domain is found at 17–105; that stretch reads KKEGAVVVDI…WRATYPAETA (89 aa). Catalysis depends on cysteine 65, which acts as the Cysteine persulfide intermediate.

The protein belongs to the GlpE family.

It localises to the cytoplasm. The enzyme catalyses thiosulfate + hydrogen cyanide = thiocyanate + sulfite + 2 H(+). It carries out the reaction thiosulfate + [thioredoxin]-dithiol = [thioredoxin]-disulfide + hydrogen sulfide + sulfite + 2 H(+). Transferase that catalyzes the transfer of sulfur from thiosulfate to thiophilic acceptors such as cyanide or dithiols. May function in a CysM-independent thiosulfate assimilation pathway by catalyzing the conversion of thiosulfate to sulfite, which can then be used for L-cysteine biosynthesis. The polypeptide is Thiosulfate sulfurtransferase GlpE (Pseudomonas putida (strain ATCC 700007 / DSM 6899 / JCM 31910 / BCRC 17059 / LMG 24140 / F1)).